The following is a 64-amino-acid chain: Large ribosomal subunit protein bL35 (64 aa).

The disordered stretch occupies residues 1 to 25 (MPKLKTHSGAAKRFKKTATGKVKRS).

Belongs to the bacterial ribosomal protein bL35 family.

This Koribacter versatilis (strain Ellin345) protein is Large ribosomal subunit protein bL35.